The primary structure comprises 94 residues: Large ribosomal subunit protein eL42 (94 aa).

The Zn(2+) site is built by Cys-11, Cys-14, Cys-71, and Cys-74. The C4-type zinc-finger motif lies at 11 to 74 (CPFCKKHTIH…LDLRFRCTEC (64 aa)).

It belongs to the eukaryotic ribosomal protein eL42 family. Part of the 50S ribosomal subunit. It depends on Zn(2+) as a cofactor.

In terms of biological role, binds to the 23S rRNA. This is Large ribosomal subunit protein eL42 from Pyrococcus furiosus (strain ATCC 43587 / DSM 3638 / JCM 8422 / Vc1).